The sequence spans 65 residues: MENTENVRSGRNQREYSKERQQEGGYKEVSKAAVRKEGDVKQDMGPSVSMTVVGEKVEFTQHFHF.

A compositionally biased stretch (polar residues) spans 1 to 10; the sequence is MENTENVRSG. The disordered stretch occupies residues 1-47; sequence MENTENVRSGRNQREYSKERQQEGGYKEVSKAAVRKEGDVKQDMGPS. Residues 12–42 are compositionally biased toward basic and acidic residues; the sequence is NQREYSKERQQEGGYKEVSKAAVRKEGDVKQ.

The protein belongs to the carmovirus/necrovirus/panicovirus movement protein p8 family.

Cell-to-cell movement. This is Probable movement protein p8 from Tobacco necrosis virus (strain D) (TNV-D).